The sequence spans 203 residues: V-type ATP synthase subunit D (203 aa).

This sequence belongs to the V-ATPase D subunit family.

Functionally, produces ATP from ADP in the presence of a proton gradient across the membrane. This Chlamydia trachomatis serovar L2 (strain ATCC VR-902B / DSM 19102 / 434/Bu) protein is V-type ATP synthase subunit D.